The sequence spans 130 residues: MSQAQYAGTGRRKNAVARVRLVPGTGKITVNKKDVEEYIPHADLRLVINQPFAVTSTVGQYDVFVNVNGGGYGGQAGAIRHGIARALLQVDPDFRDSLKRAGLLTRDARMVERKKPGLKKARKASQFSKR.

It belongs to the universal ribosomal protein uS9 family.

The sequence is that of Small ribosomal subunit protein uS9 from Streptococcus gordonii (strain Challis / ATCC 35105 / BCRC 15272 / CH1 / DL1 / V288).